The primary structure comprises 89 residues: Large ribosomal subunit protein uL24 (89 aa).

This sequence belongs to the universal ribosomal protein uL24 family. As to quaternary structure, part of the 50S ribosomal subunit.

In terms of biological role, one of two assembly initiator proteins, it binds directly to the 5'-end of the 23S rRNA, where it nucleates assembly of the 50S subunit. Its function is as follows. One of the proteins that surrounds the polypeptide exit tunnel on the outside of the subunit. In Chlorobium chlorochromatii (strain CaD3), this protein is Large ribosomal subunit protein uL24.